Here is a 230-residue protein sequence, read N- to C-terminus: NADH-quinone oxidoreductase subunit 9 (230 aa).

2 consecutive 4Fe-4S ferredoxin-type domains span residues 60–93 (GRPV…MQAK) and 104–133 (AWFE…MSKE). Cys73, Cys76, Cys79, Cys83, Cys113, Cys116, Cys119, and Cys123 together coordinate [4Fe-4S] cluster.

It belongs to the complex I 23 kDa subunit family. NDH-1 is composed of 14 different subunits. Subunits Nqo7-14 constitute the membrane sector of the complex. [4Fe-4S] cluster is required as a cofactor.

The protein localises to the cell inner membrane. It carries out the reaction a quinone + NADH + 5 H(+)(in) = a quinol + NAD(+) + 4 H(+)(out). Its function is as follows. NDH-1 shuttles electrons from NADH, via FMN and iron-sulfur (Fe-S) centers, to quinones in the respiratory chain. The immediate electron acceptor for the enzyme in this species is believed to be menaquinone. Couples the redox reaction to proton translocation (for every two electrons transferred, four hydrogen ions are translocated across the cytoplasmic membrane), and thus conserves the redox energy in a proton gradient. This chain is NADH-quinone oxidoreductase subunit 9 (nqo9), found in Rhodothermus marinus (Rhodothermus obamensis).